The sequence spans 72 residues: Heat shock factor-binding protein 1-like protein 1 (72 aa).

A coiled-coil region spans residues 12 to 66; it reads DLLQNAAENLLQEVEEHFQALTATLNLRMEEMGNRIEDLQRNVDDLMAQAGIENS.

It belongs to the HSBP1 family.

In Rattus norvegicus (Rat), this protein is Heat shock factor-binding protein 1-like protein 1 (Hsbp1l1).